The sequence spans 796 residues: Putative aconitate hydratase, mitochondrial (796 aa).

The N-terminal 28 residues, 1–28 (MLRQIVSQRSAARRQLIDQLAPCLRRGL), are a transit peptide targeting the mitochondrion. Substrate-binding positions include Gln108 and 201 to 203 (DSH). [4Fe-4S] cluster is bound by residues Cys399, Cys462, and Cys465. Substrate is bound by residues Arg489 and Arg494. Positions 540-569 (EPPTGQDLPSKGFEAGNPAFQPSAPVPDSS) are disordered. Residue 685-686 (AR) participates in substrate binding.

The protein belongs to the aconitase/IPM isomerase family.

It localises to the mitochondrion. In terms of biological role, has no detectable activity towards cis-acontiate or cis-homoaconitate. The protein is Putative aconitate hydratase, mitochondrial (acoB) of Emericella nidulans (strain FGSC A4 / ATCC 38163 / CBS 112.46 / NRRL 194 / M139) (Aspergillus nidulans).